A 94-amino-acid chain; its full sequence is CRISPR-associated endoribonuclease Cas2 1 (94 aa).

Aspartate 8 provides a ligand contact to Mg(2+).

This sequence belongs to the CRISPR-associated endoribonuclease Cas2 protein family. In terms of assembly, homodimer, forms a heterotetramer with a Cas1 homodimer. Requires Mg(2+) as cofactor.

In terms of biological role, CRISPR (clustered regularly interspaced short palindromic repeat), is an adaptive immune system that provides protection against mobile genetic elements (viruses, transposable elements and conjugative plasmids). CRISPR clusters contain sequences complementary to antecedent mobile elements and target invading nucleic acids. CRISPR clusters are transcribed and processed into CRISPR RNA (crRNA). Involved in the integration of spacer DNA into the CRISPR cassette. Functions as a ssRNA-specific endoribonuclease. This chain is CRISPR-associated endoribonuclease Cas2 1 (cas21), found in Archaeoglobus fulgidus (strain ATCC 49558 / DSM 4304 / JCM 9628 / NBRC 100126 / VC-16).